A 398-amino-acid polypeptide reads, in one-letter code: Riboflavin transporter RfnT (398 aa).

12 consecutive transmembrane segments (helical) span residues Ile13–Val35, Leu45–Phe67, Arg74–Ala91, Ile95–Val117, Ile137–Ile156, Met166–Leu188, Val220–Val242, Ala252–Thr274, Ile281–Phe300, Phe305–Thr324, Phe345–Trp367, and Trp372–Leu389.

This sequence belongs to the major facilitator superfamily.

It is found in the cell membrane. Its function is as follows. Transports riboflavin into the cell. This Brucella anthropi (strain ATCC 49188 / DSM 6882 / CCUG 24695 / JCM 21032 / LMG 3331 / NBRC 15819 / NCTC 12168 / Alc 37) (Ochrobactrum anthropi) protein is Riboflavin transporter RfnT.